The sequence spans 190 residues: Ribose 1,5-bisphosphate phosphokinase PhnN (190 aa).

10 to 17 (GPSGSGKD) serves as a coordination point for ATP.

The protein belongs to the ribose 1,5-bisphosphokinase family.

It carries out the reaction alpha-D-ribose 1,5-bisphosphate + ATP = 5-phospho-alpha-D-ribose 1-diphosphate + ADP. It functions in the pathway metabolic intermediate biosynthesis; 5-phospho-alpha-D-ribose 1-diphosphate biosynthesis; 5-phospho-alpha-D-ribose 1-diphosphate from D-ribose 5-phosphate (route II): step 3/3. Its function is as follows. Catalyzes the phosphorylation of ribose 1,5-bisphosphate to 5-phospho-D-ribosyl alpha-1-diphosphate (PRPP). The protein is Ribose 1,5-bisphosphate phosphokinase PhnN of Pseudomonas fluorescens (strain SBW25).